We begin with the raw amino-acid sequence, 471 residues long: UDP-N-acetylmuramoylalanine--D-glutamate ligase (471 aa).

123 to 129 contacts ATP; that stretch reads GTNGKST.

This sequence belongs to the MurCDEF family.

It is found in the cytoplasm. The catalysed reaction is UDP-N-acetyl-alpha-D-muramoyl-L-alanine + D-glutamate + ATP = UDP-N-acetyl-alpha-D-muramoyl-L-alanyl-D-glutamate + ADP + phosphate + H(+). Its pathway is cell wall biogenesis; peptidoglycan biosynthesis. Cell wall formation. Catalyzes the addition of glutamate to the nucleotide precursor UDP-N-acetylmuramoyl-L-alanine (UMA). This chain is UDP-N-acetylmuramoylalanine--D-glutamate ligase, found in Caulobacter vibrioides (strain ATCC 19089 / CIP 103742 / CB 15) (Caulobacter crescentus).